The following is a 147-amino-acid chain: Secreted RxLR effector protein BLN04 (147 aa).

An N-terminal signal peptide occupies residues 1-23 (MATMRRICFLFVFNLAVATSTQG). The dEER signature appears at 58 to 61 (SEER). The chain crosses the membrane as a helical span at residues 117–137 (VYIYTILFLSIPIILGVAMYI).

It belongs to the RxLR effector family. In terms of assembly, interacts with host transcription factor NAC069.

It localises to the secreted. The protein localises to the host membrane. Functionally, secreted effector that inhibits stress-induced relocalization of the transcription factor NAC069 to the nucleus, thus affecting its broad role in abiotic and biotic stress responses. This chain is Secreted RxLR effector protein BLN04, found in Bremia lactucae (Lettuce downy mildew).